The sequence spans 210 residues: Glutathione S-transferase 4 (210 aa).

Residues 1–80 (MDFYYLPLSA…YLVEKYGKQD (80 aa)) form the GST N-terminal domain. Glutathione-binding positions include Ser-9, 50–52 (HTI), and 64–66 (ESR). In terms of domain architecture, GST C-terminal spans 87-208 (CPKKRALINQ…AGALEMKTLI (122 aa)).

Belongs to the GST superfamily. Theta family. In terms of assembly, homodimer.

It carries out the reaction RX + glutathione = an S-substituted glutathione + a halide anion + H(+). Conjugation of reduced glutathione to a wide number of exogenous and endogenous hydrophobic electrophiles. The chain is Glutathione S-transferase 4 (Gst4) from Musca domestica (House fly).